Here is a 121-residue protein sequence, read N- to C-terminus: T cell receptor alpha variable 23/delta variable 6 (121 aa).

Residues 1 to 21 (MDKILGASFLVLWLQLCWVSG) form the signal peptide. An Ig-like domain is found at 30-121 (QQVKQSPQSL…DSATYFCAAS (92 aa)). A disulfide bond links Cys51 and Cys118. N-linked (GlcNAc...) asparagine glycosylation occurs at Asn95.

Alpha-beta TR is a heterodimer composed of an alpha and beta chain; disulfide-linked. The alpha-beta TR is associated with the transmembrane signaling CD3 coreceptor proteins to form the TR-CD3 (TcR or TCR). The assembly of alpha-beta TR heterodimers with CD3 occurs in the endoplasmic reticulum where a single alpha-beta TR heterodimer associates with one CD3D-CD3E heterodimer, one CD3G-CD3E heterodimer and one CD247 homodimer forming a stable octameric structure. CD3D-CD3E and CD3G-CD3E heterodimers preferentially associate with TR alpha and TR beta chains, respectively. The association of the CD247 homodimer is the last step of TcR assembly in the endoplasmic reticulum and is required for transport to the cell surface.

It is found in the cell membrane. In terms of biological role, v region of the variable domain of T cell receptor (TR) alpha chain that participates in the antigen recognition. Alpha-beta T cell receptors are antigen specific receptors which are essential to the immune response and are present on the cell surface of T lymphocytes. Recognize peptide-major histocompatibility (MH) (pMH) complexes that are displayed by antigen presenting cells (APC), a prerequisite for efficient T cell adaptive immunity against pathogens. Binding of alpha-beta TR to pMH complex initiates TR-CD3 clustering on the cell surface and intracellular activation of LCK that phosphorylates the ITAM motifs of CD3G, CD3D, CD3E and CD247 enabling the recruitment of ZAP70. In turn ZAP70 phosphorylates LAT, which recruits numerous signaling molecules to form the LAT signalosome. The LAT signalosome propagates signal branching to three major signaling pathways, the calcium, the mitogen-activated protein kinase (MAPK) kinase and the nuclear factor NF-kappa-B (NF-kB) pathways, leading to the mobilization of transcription factors that are critical for gene expression and essential for T cell growth and differentiation. The T cell repertoire is generated in the thymus, by V-(D)-J rearrangement. This repertoire is then shaped by intrathymic selection events to generate a peripheral T cell pool of self-MH restricted, non-autoaggressive T cells. Post-thymic interaction of alpha-beta TR with the pMH complexes shapes TR structural and functional avidity. The sequence is that of T cell receptor alpha variable 23/delta variable 6 from Homo sapiens (Human).